The following is a 311-amino-acid chain: Tricarboxylate transport protein, mitochondrial (311 aa).

Positions 1–13 (MAAARAPRALTSA) are cleaved as a propeptide — removed in mature form. Residues 1-15 (MAAARAPRALTSASP) are compositionally biased toward low complexity. The disordered stretch occupies residues 1–22 (MAAARAPRALTSASPGSGKAKL). 3 Solcar repeats span residues 23-111 (THPG…LSNH), 122-208 (TRGL…LRNW), and 218-303 (MNPL…VVKL). The next 3 membrane-spanning stretches (helical) occupy residues 29–46 (ILAG…TFPT), 86–105 (GLSS…FGTF), and 129–143 (LGAG…VCPM). Serine 156 carries the post-translational modification Phosphoserine. A run of 3 helical transmembrane segments spans residues 183 to 202 (GLTA…FFVM), 224 to 241 (GVFG…NTPL), and 278 to 297 (GTVP…FIIY).

This sequence belongs to the mitochondrial carrier (TC 2.A.29) family. Possesses a short cleavable presequence, which, however, is found to be dispensable both for targeting to mitochondria and insertion into the inner membrane. However, the presequence is required to keep SLC25A1 in a soluble state and thus in an import-competent state. Mature SLC25A1 lacking the presequence is prone to aggregation.

It localises to the mitochondrion inner membrane. The protein resides in the mitochondrion membrane. It catalyses the reaction (S)-malate(in) + citrate(out) = (S)-malate(out) + citrate(in). The catalysed reaction is D-threo-isocitrate(in) + citrate(out) = D-threo-isocitrate(out) + citrate(in). It carries out the reaction citrate(out) + succinate(in) = citrate(in) + succinate(out). The enzyme catalyses phosphoenolpyruvate(in) + citrate(out) = phosphoenolpyruvate(out) + citrate(in). It catalyses the reaction cis-aconitate(in) + citrate(out) = cis-aconitate(out) + citrate(in). The catalysed reaction is trans-aconitate(in) + citrate(out) = trans-aconitate(out) + citrate(in). It carries out the reaction maleate(in) + citrate(out) = maleate(out) + citrate(in). In terms of biological role, mitochondrial electroneutral antiporter that exports citrate from the mitochondria into the cytosol in exchange for malate. Also able to mediate the exchange of citrate for isocitrate, phosphoenolpyruvate, cis-aconitate and to a lesser extent trans-aconitate, maleate and succinate. In the cytoplasm, citrate plays important roles in fatty acid and sterol synthesis, regulation of glycolysis, protein acetylation, and other physiopathological processes. This Bos taurus (Bovine) protein is Tricarboxylate transport protein, mitochondrial (SLC25A1).